The primary structure comprises 442 residues: MREIVHIQAGQCGNQIGSKFWEVISDEQGVDPPDIPGDSDLQLERINVYYNEATGGRYVPAILMDLEPGTMDSVRAGPYGQIFRPDNFVFGQTGAGNNWAKGHYTEGPELIDSVLDVVRKEAESCDCLQGFQIAHSLGGGTGSGMGTLLISKIREEYPDRMMMTFSVIPSPKVSDTVVEPYNTTLSVHQLVENADEVMCIGNEALYDICLPTLKLTTPTFGHETLVSAVMSGVTCCLRFPGQLNSDLRKLAVNLIPFPRLHFFLVGFAPLTSRGSQQYRALTVPELTQQMFDAKNMMAASDPAHGRYLTASAMFRGRMSTKEVDEQMLNVQNKNSSYFVEWIPNNIKSSVCDIPPKGLKMSATFIGNNTAIQEMFKRVSEQFTAMFRRKAFLHWYTGEGMDEMEFTEAESNMNDLVSEYQQYQDATVEEEGEFDEEEDVEQY.

GTP-binding residues include Gln11, Glu67, Ser136, Gly140, Thr141, Gly142, and Asn202. Residue Glu67 participates in Mg(2+) binding.

Belongs to the tubulin family. In terms of assembly, dimer of alpha and beta chains. A typical microtubule is a hollow water-filled tube with an outer diameter of 25 nm and an inner diameter of 15 nM. Alpha-beta heterodimers associate head-to-tail to form protofilaments running lengthwise along the microtubule wall with the beta-tubulin subunit facing the microtubule plus end conferring a structural polarity. Microtubules usually have 13 protofilaments but different protofilament numbers can be found in some organisms and specialized cells. Requires Mg(2+) as cofactor.

The protein resides in the cytoplasm. Its subcellular location is the cytoskeleton. Its function is as follows. Tubulin is the major constituent of microtubules, a cylinder consisting of laterally associated linear protofilaments composed of alpha- and beta-tubulin heterodimers. Microtubules grow by the addition of GTP-tubulin dimers to the microtubule end, where a stabilizing cap forms. Below the cap, tubulin dimers are in GDP-bound state, owing to GTPase activity of alpha-tubulin. The protein is Tubulin beta chain (TUBB) of Euglena gracilis.